The sequence spans 492 residues: N-succinylglutamate 5-semialdehyde dehydrogenase (492 aa).

220-225 (GSASTG) contributes to the NAD(+) binding site. Active-site residues include glutamate 243 and cysteine 277.

Belongs to the aldehyde dehydrogenase family. AstD subfamily.

It carries out the reaction N-succinyl-L-glutamate 5-semialdehyde + NAD(+) + H2O = N-succinyl-L-glutamate + NADH + 2 H(+). The protein operates within amino-acid degradation; L-arginine degradation via AST pathway; L-glutamate and succinate from L-arginine: step 4/5. Functionally, catalyzes the NAD-dependent reduction of succinylglutamate semialdehyde into succinylglutamate. The sequence is that of N-succinylglutamate 5-semialdehyde dehydrogenase from Salmonella typhimurium (strain LT2 / SGSC1412 / ATCC 700720).